The chain runs to 374 residues: Pectate lyase 1 (374 aa).

The first 22 residues, 1–22 (MKYLLPSAAAGLLLLAAQPTMA), serve as a signal peptide directing secretion. The cysteines at positions 93 and 176 are disulfide-linked. Ca(2+)-binding residues include aspartate 150, aspartate 152, glutamate 187, and aspartate 191. Arginine 239 is an active-site residue. A disulfide bond links cysteine 350 and cysteine 373.

It belongs to the polysaccharide lyase 1 family. PLADES subfamily. Requires Ca(2+) as cofactor.

Its subcellular location is the secreted. It carries out the reaction Eliminative cleavage of (1-&gt;4)-alpha-D-galacturonan to give oligosaccharides with 4-deoxy-alpha-D-galact-4-enuronosyl groups at their non-reducing ends.. Its pathway is glycan metabolism; pectin degradation; 2-dehydro-3-deoxy-D-gluconate from pectin: step 2/5. Functionally, involved in maceration and soft-rotting of plant tissue. The sequence is that of Pectate lyase 1 (pel1) from Pectobacterium atrosepticum (strain SCRI 1043 / ATCC BAA-672) (Erwinia carotovora subsp. atroseptica).